The chain runs to 269 residues: 5'-nucleotidase SurE (269 aa).

A divalent metal cation is bound by residues D11, D12, S43, and N101.

Belongs to the SurE nucleotidase family. It depends on a divalent metal cation as a cofactor.

The protein localises to the cytoplasm. The enzyme catalyses a ribonucleoside 5'-phosphate + H2O = a ribonucleoside + phosphate. In terms of biological role, nucleotidase that shows phosphatase activity on nucleoside 5'-monophosphates. This chain is 5'-nucleotidase SurE, found in Prochlorococcus marinus (strain MIT 9515).